A 57-amino-acid chain; its full sequence is Large ribosomal subunit protein bL32A (57 aa).

Belongs to the bacterial ribosomal protein bL32 family.

This is Large ribosomal subunit protein bL32A (rpmF1) from Streptomyces coelicolor (strain ATCC BAA-471 / A3(2) / M145).